A 129-amino-acid chain; its full sequence is Small ribosomal subunit protein uS9 (129 aa).

It belongs to the universal ribosomal protein uS9 family.

The polypeptide is Small ribosomal subunit protein uS9 (Aliarcobacter butzleri (strain RM4018) (Arcobacter butzleri)).